The sequence spans 637 residues: Poly(A) polymerase beta (637 aa).

Residues 1-10 show a composition bias toward low complexity; sequence MMPFPVTTQG. Residues 1–23 are disordered; the sequence is MMPFPVTTQGPPQPAPPPNRYGV. ATP-binding positions include 101–103, Thr110, 114–116, Asp168, Lys229, Tyr238, and 247–248; these read FGS, DID, and GV. Residues Asp114, Asp116, and Asp168 each coordinate Mg(2+). The tract at residues 535–555 is disordered; it reads SVPSSTSTMKTGPLISSSQGR.

The protein belongs to the poly(A) polymerase family. In terms of assembly, interacts with GSG1. Mg(2+) is required as a cofactor. The cofactor is Mn(2+). In terms of tissue distribution, testis specific.

Its subcellular location is the nucleus. It carries out the reaction RNA(n) + ATP = RNA(n)-3'-adenine ribonucleotide + diphosphate. The protein is Poly(A) polymerase beta of Homo sapiens (Human).